Consider the following 316-residue polypeptide: GPI-specific phospholipase A2-like PGAP3 (316 aa).

The first 18 residues, 1-18, serve as a signal peptide directing secretion; it reads MAPFLVLFLAGVVAASRG. The Lumenal portion of the chain corresponds to 19–93; it reads DREPVYRDCV…QFHGKWPFSR (75 aa). The N-linked (GlcNAc...) asparagine glycan is linked to N35. A helical transmembrane segment spans residues 94 to 114; that stretch reads FLFFQEPASALASFLNGVASL. At 115-132 the chain is on the cytoplasmic side; the sequence is LMLLRYRSSVPSSCQMYR. A helical membrane pass occupies residues 133 to 153; it reads TCLAFSMVSVNAWFWSTIFHT. At 154–163 the chain is on the lumenal side; that stretch reads RDTALTEKMD. Residues 164 to 180 form a helical membrane-spanning segment; that stretch reads YFCASSVILHSIYLCCM. At 181–182 the chain is on the cytoplasmic side; it reads RT. The chain crosses the membrane as a helical span at residues 183–203; sequence FGLQYPSIANGFGAFLVLLFA. Topologically, residues 204–218 are lumenal; it reads CHVSYLTLGRFDYSY. A helical membrane pass occupies residues 219-239; it reads NMAANTGFGVLNLMWWLAWCF. Residues 240-251 lie on the Cytoplasmic side of the membrane; that stretch reads RRRFHQPYLWKC. Residues 252-272 traverse the membrane as a helical segment; the sequence is VLVVISLQSLALLELLDFPPV. Residue M273 is a topological domain, lumenal. Residues 274–293 traverse the membrane as a helical segment; that stretch reads WILDAHALWHFSTVPLHFLF. At 294-316 the chain is on the cytoplasmic side; sequence YSFLKDDSLYLLKINHDDIPKLD.

Belongs to the PGAP3 family.

The protein resides in the golgi apparatus membrane. Functionally, involved in the fatty acid remodeling steps of GPI-anchor maturation where the unsaturated acyl chain at sn-2 of inositol phosphate is replaced by a saturated stearoyl chain. May catalyze the first step of the fatty acid remodeling, by removing the unsaturated acyl chain at sn-2 of inositol phosphate, generating a lyso-GPI intermediate. The fatty acid remodeling steps is critical for the integration of GPI-APs into lipid rafts. This Xenopus tropicalis (Western clawed frog) protein is GPI-specific phospholipase A2-like PGAP3.